The primary structure comprises 309 residues: MSSLRTDDDTWDIASSVGATAVMVAAARAAETERHDALINDPYAKVLVEGAGAGAWRFIADEDLVAKASESDTEVGALFEHMKNYQAVRTHFFDAFFSAAVDAGVRQIVILASGLDSRAFRLPWPAGTVVYEIDQPLVLDYKSSTLAAHGVAPTAERREVPIDLRQDWPAALVATGFDPARPTAWLAEGLLMYLPADAQDRLFAQITELSAPGSQVAAESMGVHAPDRRERMRERFASIASQIDIEPMDITELTYEDPDRAEVAEWLAAHGWTAQAVPSQDAMRRLDRYVEVADSDGQSFSTFTTGTKL.

S-adenosyl-L-methionine is bound by residues Asp134 and 163–164 (DL).

It belongs to the UPF0677 family.

Exhibits S-adenosyl-L-methionine-dependent methyltransferase activity. This chain is Putative S-adenosyl-L-methionine-dependent methyltransferase Mflv_0743, found in Mycolicibacterium gilvum (strain PYR-GCK) (Mycobacterium gilvum (strain PYR-GCK)).